Here is a 372-residue protein sequence, read N- to C-terminus: Ubl carboxyl-terminal hydrolase 18 (372 aa).

Positions 19 to 45 (SSQSPADLEEKKEEDSNMKREQPRERP) are disordered. Residues 26–45 (LEEKKEEDSNMKREQPRERP) show a composition bias toward basic and acidic residues. Positions 36-51 (MKREQPRERPRAWDYP) are mediates interaction with IFNAR2. The interval 51-112 (PHGLVGLHNI…MLLLLEKMQD (62 aa)) is mediates interaction with STAT2. One can recognise a USP domain in the interval 55-370 (VGLHNIGQTC…TAYLLVYMKM (316 aa)). Cys64 serves as the catalytic Nucleophile. Residues 303–312 (ELFAVIAHVG) are mediates interaction with STAT2 and necessary for the negative regulation of the type I IFN signaling pathway. The interval 313-372 (MADSGHYCVYIRNAVDGKWFCFNDSNICLVSWEDIQCTYGNPNYHWQETAYLLVYMKMEC) is mediates interaction with IFNAR2. His318 acts as the Proton acceptor in catalysis.

This sequence belongs to the peptidase C19 family. Interacts with STAT2; the interaction is direct. Interacts with IFNAR2; indirectly via STAT2, it negatively regulates the assembly of the ternary interferon-IFNAR1-IFNAR2 complex and inhibits type I interferon signaling. Interacts with STING1. Interacts with USP20.

It is found in the cytoplasm. The protein localises to the nucleus. It carries out the reaction Thiol-dependent hydrolysis of ester, thioester, amide, peptide and isopeptide bonds formed by the C-terminal Gly of ubiquitin (a 76-residue protein attached to proteins as an intracellular targeting signal).. Its function is as follows. Interferon-induced ISG15-specific protease that plays a crucial role for maintaining a proper balance of ISG15-conjugated proteins in cells. Regulates protein ISGylation by efficiently cleaving ISG15 conjugates linked via isopeptide bonds. Regulates T-cell activation and T-helper 17 (Th17) cell differentiation by deubiquitinating TAK1, likely to keep TAK1-TAB complexes in steady conditions. In turn, restricts activation of NF-kappa-B, NFAT, and JNK as well as expression of IL2 in T-cells after TCR activation. Acts as a molecular adapter with USP20 to promote innate antiviral response through deubiquitinating STING1. Involved also in the negative regulation of the inflammatory response triggered by type I interferon. Upon recruitment by STAT2 to the type I interferon receptor subunit IFNAR2 interferes with the assembly of the ternary interferon-IFNAR1-IFNAR2 complex and acts as a negative regulator of the type I interferon signaling pathway. In terms of biological role, has enzymatic activity similar to isoform 1 and interferes with type I interferon signaling. Major deISGylation enzyme for nuclear proteins. In Homo sapiens (Human), this protein is Ubl carboxyl-terminal hydrolase 18 (USP18).